We begin with the raw amino-acid sequence, 72 residues long: uncharacterized protein (72 aa).

The stretch at Tyr27–Val55 forms a coiled coil.

This is an uncharacterized protein from Schizosaccharomyces pombe (strain 972 / ATCC 24843) (Fission yeast).